The chain runs to 286 residues: 2-hydroxy-6-oxo-6-phenylhexa-2,4-dienoate hydrolase (286 aa).

Residues 42–43, Asn-51, Lys-111, Ser-180, and Arg-190 each bind substrate; that span reads GG. Residues 173–271 enclose the AB hydrolase-1 domain; it reads NVFLFDQSLI…RCVHWAQWEH (99 aa). The active-site Proton acceptor is His-265. Trp-266 serves as a coordination point for substrate.

The protein belongs to the AB hydrolase superfamily. BphD family. In terms of assembly, homodimer.

The enzyme catalyses 2,6-dioxo-6-phenylhexa-3-enoate + H2O = 2-oxopent-4-enoate + benzoate + H(+). It participates in xenobiotic degradation; biphenyl degradation; 2-hydroxy-2,4-pentadienoate and benzoate from biphenyl: step 4/4. Catalyzes an unusual C-C bond hydrolysis of 2-hydroxy-6-oxo-6-phenylhexa-2,4-dienoic acid (HOPDA) to produce benzoic acid and 2-hydroxy-2,4-pentadienoic acid (HPD). The protein is 2-hydroxy-6-oxo-6-phenylhexa-2,4-dienoate hydrolase of Delftia acidovorans (Pseudomonas acidovorans).